Here is a 417-residue protein sequence, read N- to C-terminus: D-amino acid dehydrogenase (417 aa).

Residue Ala3 to Trp17 coordinates FAD.

This sequence belongs to the DadA oxidoreductase family. It depends on FAD as a cofactor.

The catalysed reaction is a D-alpha-amino acid + A + H2O = a 2-oxocarboxylate + AH2 + NH4(+). In terms of biological role, oxidative deamination of D-amino acids. The sequence is that of D-amino acid dehydrogenase from Vibrio vulnificus (strain CMCP6).